A 326-amino-acid chain; its full sequence is Peroxidase 41 (326 aa).

The first 20 residues, 1–20, serve as a signal peptide directing secretion; sequence MSSVINVLFVVLVFVPSIYS. The N-linked (GlcNAc...) asparagine glycan is linked to Asn25. Cystine bridges form between Cys35/Cys116, Cys68/Cys73, Cys122/Cys318, and Cys201/Cys228. His66 functions as the Proton acceptor in the catalytic mechanism. 4 residues coordinate Ca(2+): Asp67, Gly72, Asp74, and Ser76. Pro164 is a substrate binding site. A glycan (N-linked (GlcNAc...) asparagine) is linked at Asn167. Residue His194 coordinates heme b. Thr195 is a binding site for Ca(2+). The N-linked (GlcNAc...) asparagine glycan is linked to Asn234. Residues Asp242, Thr245, and Asp250 each contribute to the Ca(2+) site. A glycan (N-linked (GlcNAc...) asparagine) is linked at Asn286.

This sequence belongs to the peroxidase family. Classical plant (class III) peroxidase subfamily. It depends on heme b as a cofactor. Requires Ca(2+) as cofactor.

The protein localises to the secreted. The catalysed reaction is 2 a phenolic donor + H2O2 = 2 a phenolic radical donor + 2 H2O. In terms of biological role, removal of H(2)O(2), oxidation of toxic reductants, biosynthesis and degradation of lignin, suberization, auxin catabolism, response to environmental stresses such as wounding, pathogen attack and oxidative stress. These functions might be dependent on each isozyme/isoform in each plant tissue. This Arabidopsis thaliana (Mouse-ear cress) protein is Peroxidase 41 (PER41).